A 107-amino-acid polypeptide reads, in one-letter code: U1-lycotoxin-Ls1n (107 aa).

The signal sequence occupies residues 1-20 (MMKVLVVVALLVTLISYSSS). The propeptide occupies 21–41 (EGIDDLEADELLSLMANEQTR). Cystine bridges form between Cys-44–Cys-59, Cys-51–Cys-68, Cys-58–Cys-86, and Cys-70–Cys-84.

Belongs to the neurotoxin 19 (CSTX) family. 04 (U1-Lctx) subfamily. In terms of tissue distribution, expressed by the venom gland.

The protein resides in the secreted. This chain is U1-lycotoxin-Ls1n, found in Lycosa singoriensis (Wolf spider).